Reading from the N-terminus, the 122-residue chain is Histone H2B, gonadal (122 aa).

The disordered stretch occupies residues 1-31 (MPPKVSSKGAKKAGKAKAARSGDKKRKRRRK). Positions 9–31 (GAKKAGKAKAARSGDKKRKRRRK) are enriched in basic residues. Residue Ser109 is glycosylated (O-linked (GlcNAc) serine). Lys117 participates in a covalent cross-link: Glycyl lysine isopeptide (Lys-Gly) (interchain with G-Cter in ubiquitin).

Belongs to the histone H2B family. The nucleosome is a histone octamer containing two molecules each of H2A, H2B, H3 and H4 assembled in one H3-H4 heterotetramer and two H2A-H2B heterodimers. The octamer wraps approximately 147 bp of DNA. Post-translationally, monoubiquitination of Lys-117 gives a specific tag for epigenetic transcriptional activation and is also prerequisite for histone H3 'Lys-4' and 'Lys-79' methylation. GlcNAcylation at Ser-109 promotes monoubiquitination of Lys-117. It fluctuates in response to extracellular glucose, and associates with transcribed genes.

It is found in the nucleus. It localises to the chromosome. Core component of nucleosome. Nucleosomes wrap and compact DNA into chromatin, limiting DNA accessibility to the cellular machineries which require DNA as a template. Histones thereby play a central role in transcription regulation, DNA repair, DNA replication and chromosomal stability. DNA accessibility is regulated via a complex set of post-translational modifications of histones, also called histone code, and nucleosome remodeling. This chain is Histone H2B, gonadal, found in Patella granatina (Sandpaper limpet).